The sequence spans 348 residues: MNRTDELRTARIESLVTPAELALRYPVTPGVATHVTDSRRRIEKILNGEDKRLLVIIGPCSIHDLTAAMEYATRLQSLRNQYQSRLEIVMRTYFEKPRTVVGWKGLISDPDLNGSYRVNHGLELARKLLLQVNELGVPTATEFLDMVTGQFIADLISWGAIGARTTESQIHREMASALSCPVGFKNGTDGNTRIAVDAIRAARASHMFLSPDKNGQMTIYQTSGNPYGHIIMRGGKKPNYHADDIAAACDTLHEFDLPEHLVVDFSHGNCQKQHRRQLEVCEDICQQIRNGSTAIAGIMAESFLREGTQKIVGSQPLTYGQSITDPCLGWEDTERLVEKLASAVDTRF.

The protein belongs to the class-I DAHP synthase family.

It carries out the reaction D-erythrose 4-phosphate + phosphoenolpyruvate + H2O = 7-phospho-2-dehydro-3-deoxy-D-arabino-heptonate + phosphate. Its pathway is metabolic intermediate biosynthesis; chorismate biosynthesis; chorismate from D-erythrose 4-phosphate and phosphoenolpyruvate: step 1/7. Functionally, stereospecific condensation of phosphoenolpyruvate (PEP) and D-erythrose-4-phosphate (E4P) giving rise to 3-deoxy-D-arabino-heptulosonate-7-phosphate (DAHP). In Escherichia coli (strain K12), this protein is Phospho-2-dehydro-3-deoxyheptonate aldolase, Trp-sensitive (aroH).